The sequence spans 356 residues: Probable butyrate kinase (356 aa).

It belongs to the acetokinase family.

It is found in the cytoplasm. It catalyses the reaction butanoate + ATP = butanoyl phosphate + ADP. The polypeptide is Probable butyrate kinase (Clostridium perfringens (strain SM101 / Type A)).